The chain runs to 515 residues: Integrator complex subunit 14 (515 aa).

Residues 2 to 204 (PTVVVMDVSL…KNVQSMFGKL (203 aa)) form the VWFA domain. Positions 10, 12, and 86 each coordinate Mg(2+). Lysine 418 carries the N6-acetyllysine modification.

The protein belongs to the Integrator subunit 14 family. In terms of assembly, component of the Integrator complex, composed of core subunits INTS1, INTS2, INTS3, INTS4, INTS5, INTS6, INTS7, INTS8, INTS9/RC74, INTS10, INTS11/CPSF3L, INTS12, INTS13, INTS14 and INTS15. The core complex associates with protein phosphatase 2A subunits PPP2CA and PPP2R1A, to form the Integrator-PP2A (INTAC) complex. INTS14 is part of the tail subcomplex, composed of INTS10, INTS13, INTS14 and INTS15.

Its subcellular location is the nucleus. In terms of biological role, component of the integrator complex, a multiprotein complex that terminates RNA polymerase II (Pol II) transcription in the promoter-proximal region of genes. The integrator complex provides a quality checkpoint during transcription elongation by driving premature transcription termination of transcripts that are unfavorably configured for transcriptional elongation: the complex terminates transcription by (1) catalyzing dephosphorylation of the C-terminal domain (CTD) of Pol II subunit POLR2A/RPB1 and SUPT5H/SPT5, (2) degrading the exiting nascent RNA transcript via endonuclease activity and (3) promoting the release of Pol II from bound DNA. The integrator complex is also involved in terminating the synthesis of non-coding Pol II transcripts, such as enhancer RNAs (eRNAs), small nuclear RNAs (snRNAs), telomerase RNAs and long non-coding RNAs (lncRNAs). Within the integrator complex, INTS14 is part of the integrator tail module that acts as a platform for the recruitment of transcription factors at promoters. The chain is Integrator complex subunit 14 from Rattus norvegicus (Rat).